We begin with the raw amino-acid sequence, 388 residues long: MADPYGWIRADLESLHRVGWYRTTRTHNGLAGPQMDVDGKPVLQFASNDYLGLSGDERLIEAACRAVRLYGAGATGSRLLSGERDVHRELEQALAGWKGCDDCLVFSSGYLANLGTIPALVGKRDLVVGDEYNHACLRGGAELSGAVHRLYPHGDCSALESLLIEQRERHRRCLICTDSVFSMDGDLIDLARIADLARRYGCMLLVDEAHATGVLGPTGAGAVEQLGLTRSLVQMGTLSKALGSQGGYVCGSAELVDYLRNRARSFVYTTGLAPAAAAAALEAVHIARTETPRRALLRQNIARLRAGIDEIGIAQLPSDAAILCLWVGDIEATHCFAGELFEEGIFAPAVRPPTVPTSRIRLSLMATHTEAMIDSLIAALTQVSSRFS.

Arginine 22 is a binding site for substrate. 109 to 110 (GY) lines the pyridoxal 5'-phosphate pocket. Substrate is bound at residue histidine 134. Residues serine 182, 207 to 210 (DEAH), and 237 to 240 (TLSK) each bind pyridoxal 5'-phosphate. Residue lysine 240 is modified to N6-(pyridoxal phosphate)lysine. Substrate is bound at residue threonine 354.

This sequence belongs to the class-II pyridoxal-phosphate-dependent aminotransferase family. BioF subfamily. In terms of assembly, homodimer. It depends on pyridoxal 5'-phosphate as a cofactor.

The catalysed reaction is 6-carboxyhexanoyl-[ACP] + L-alanine + H(+) = (8S)-8-amino-7-oxononanoate + holo-[ACP] + CO2. It functions in the pathway cofactor biosynthesis; biotin biosynthesis. In terms of biological role, catalyzes the decarboxylative condensation of pimeloyl-[acyl-carrier protein] and L-alanine to produce 8-amino-7-oxononanoate (AON), [acyl-carrier protein], and carbon dioxide. The sequence is that of Putative 8-amino-7-oxononanoate synthase (bioF) from Gloeobacter violaceus (strain ATCC 29082 / PCC 7421).